Reading from the N-terminus, the 161-residue chain is 3-isopropylmalate dehydratase small subunit (161 aa).

Belongs to the LeuD family. LeuD type 2 subfamily. In terms of assembly, heterodimer of LeuC and LeuD.

The catalysed reaction is (2R,3S)-3-isopropylmalate = (2S)-2-isopropylmalate. Its pathway is amino-acid biosynthesis; L-leucine biosynthesis; L-leucine from 3-methyl-2-oxobutanoate: step 2/4. Catalyzes the isomerization between 2-isopropylmalate and 3-isopropylmalate, via the formation of 2-isopropylmaleate. The protein is 3-isopropylmalate dehydratase small subunit of Clostridium botulinum (strain Eklund 17B / Type B).